The following is a 387-amino-acid chain: MSVIKMTDLDLAGKRVFIRADLNVPVKEGKVTSDARIRASLPTIELALKQGAKVMVTSHLGRPTEGEYNEEFSLLPVVNYLKDKLSNPVRLVKDYLDGVDVAEGELVVLENVRFNKGEKKDDEALSKKYAALCDVFVMDAFGTAHRAQASTHGIGKFADVACAGPLLAAELDALGKALKEPARPMVAIVGGSKVSTKLTVLDSLSKIADQLIVGGGIANTFVAAQGHSVGKSLYEADLVDEAKRLLTTCDIPVPTDVRVATEFSETAPATLKSVNDVKEDEQILDIGDASAQQLAEILKNAKTILWNGPVGVFEFPNFRKGTEIVANAIADSEAFSIAGGGDTLAAIDLFGIADKISYISTGGGAFLEFVEGKVLPAVAMLEERAKK.

Substrate contacts are provided by residues 21 to 23 (DLN), arginine 36, 59 to 62 (HLGR), arginine 113, and arginine 146. ATP-binding positions include lysine 197, glutamate 314, and 340 to 343 (GGDT).

This sequence belongs to the phosphoglycerate kinase family. In terms of assembly, monomer.

It is found in the cytoplasm. It carries out the reaction (2R)-3-phosphoglycerate + ATP = (2R)-3-phospho-glyceroyl phosphate + ADP. The protein operates within carbohydrate degradation; glycolysis; pyruvate from D-glyceraldehyde 3-phosphate: step 2/5. In Salmonella schwarzengrund (strain CVM19633), this protein is Phosphoglycerate kinase.